The primary structure comprises 318 residues: MSPVLSESQLRDFKHTLESSKIPFRSEVRLGILSSFKIGGVCPVIVEPEISSQVSEILHIFSKFDIPWKILGGGSNLLISDHPDNFVTLRLSGKFKEFVSLGDGKFKIGAATNTTPTFRQISQLGYTGAEFLSTIPGWTGGAVIQNAGCYGGELFDLIESVEFLRNGEMFVRKPSEIKYGYRFTEFLNQKDSIILGIEILLKEGNLEEIESSLKDKRDRRNSSQPENKKSAGSVFKNPKVFREDGKEIKAWELLDQAGLRGQIKGGAQISPEHCNFIVNLGTATASDVHYLIDLVVDRVYQTSGILLNREIEFFGDIP.

The region spanning 38–204 (IGGVCPVIVE…LGIEILLKEG (167 aa)) is the FAD-binding PCMH-type domain. Arginine 182 is an active-site residue. Positions 212–229 (SLKDKRDRRNSSQPENKK) are enriched in basic and acidic residues. The interval 212 to 232 (SLKDKRDRRNSSQPENKKSAG) is disordered. Catalysis depends on serine 233, which acts as the Proton donor. Residue glutamate 310 is part of the active site.

The protein belongs to the MurB family. FAD serves as cofactor.

It localises to the cytoplasm. The catalysed reaction is UDP-N-acetyl-alpha-D-muramate + NADP(+) = UDP-N-acetyl-3-O-(1-carboxyvinyl)-alpha-D-glucosamine + NADPH + H(+). The protein operates within cell wall biogenesis; peptidoglycan biosynthesis. Its function is as follows. Cell wall formation. In Leptospira interrogans serogroup Icterohaemorrhagiae serovar Lai (strain 56601), this protein is UDP-N-acetylenolpyruvoylglucosamine reductase.